Reading from the N-terminus, the 60-residue chain is Large ribosomal subunit protein bL32 (60 aa).

This sequence belongs to the bacterial ribosomal protein bL32 family.

This is Large ribosomal subunit protein bL32 from Synechococcus sp. (strain JA-3-3Ab) (Cyanobacteria bacterium Yellowstone A-Prime).